The following is a 136-amino-acid chain: Large-conductance mechanosensitive channel (136 aa).

Transmembrane regions (helical) follow at residues Ala-9–Phe-29 and Phe-78–Ala-98.

Belongs to the MscL family. In terms of assembly, homopentamer.

It is found in the cell inner membrane. In terms of biological role, channel that opens in response to stretch forces in the membrane lipid bilayer. May participate in the regulation of osmotic pressure changes within the cell. In Azotobacter vinelandii (strain DJ / ATCC BAA-1303), this protein is Large-conductance mechanosensitive channel.